Consider the following 152-residue polypeptide: Transcriptional regulator MraZ (152 aa).

SpoVT-AbrB domains lie at 5–52 (ANAV…PLPE) and 81–124 (AVDL…NEDA).

This sequence belongs to the MraZ family. Forms oligomers.

Its subcellular location is the cytoplasm. It is found in the nucleoid. The chain is Transcriptional regulator MraZ from Azotobacter vinelandii (strain DJ / ATCC BAA-1303).